The primary structure comprises 292 residues: 4-hydroxy-tetrahydrodipicolinate synthase (292 aa).

T45 serves as a coordination point for pyruvate. The active-site Proton donor/acceptor is Y133. K161 (schiff-base intermediate with substrate) is an active-site residue. I203 lines the pyruvate pocket.

The protein belongs to the DapA family. As to quaternary structure, homotetramer; dimer of dimers.

The protein resides in the cytoplasm. It carries out the reaction L-aspartate 4-semialdehyde + pyruvate = (2S,4S)-4-hydroxy-2,3,4,5-tetrahydrodipicolinate + H2O + H(+). It functions in the pathway amino-acid biosynthesis; L-lysine biosynthesis via DAP pathway; (S)-tetrahydrodipicolinate from L-aspartate: step 3/4. Functionally, catalyzes the condensation of (S)-aspartate-beta-semialdehyde [(S)-ASA] and pyruvate to 4-hydroxy-tetrahydrodipicolinate (HTPA). The sequence is that of 4-hydroxy-tetrahydrodipicolinate synthase from Nitrosococcus oceani (strain ATCC 19707 / BCRC 17464 / JCM 30415 / NCIMB 11848 / C-107).